Consider the following 348-residue polypeptide: 4-hydroxy-3-methylbut-2-enyl diphosphate reductase (348 aa).

Cys-21 serves as a coordination point for [4Fe-4S] cluster. His-50 and His-86 together coordinate (2E)-4-hydroxy-3-methylbut-2-enyl diphosphate. Dimethylallyl diphosphate is bound by residues His-50 and His-86. Positions 50 and 86 each coordinate isopentenyl diphosphate. Cys-108 is a [4Fe-4S] cluster binding site. A (2E)-4-hydroxy-3-methylbut-2-enyl diphosphate-binding site is contributed by His-136. His-136 serves as a coordination point for dimethylallyl diphosphate. Position 136 (His-136) interacts with isopentenyl diphosphate. Glu-138 acts as the Proton donor in catalysis. Thr-177 contacts (2E)-4-hydroxy-3-methylbut-2-enyl diphosphate. A [4Fe-4S] cluster-binding site is contributed by Cys-207. 4 residues coordinate (2E)-4-hydroxy-3-methylbut-2-enyl diphosphate: Ser-235, Ser-236, Asn-237, and Ser-280. Dimethylallyl diphosphate-binding residues include Ser-235, Ser-236, Asn-237, and Ser-280. The isopentenyl diphosphate site is built by Ser-235, Ser-236, Asn-237, and Ser-280.

Belongs to the IspH family. It depends on [4Fe-4S] cluster as a cofactor.

It catalyses the reaction isopentenyl diphosphate + 2 oxidized [2Fe-2S]-[ferredoxin] + H2O = (2E)-4-hydroxy-3-methylbut-2-enyl diphosphate + 2 reduced [2Fe-2S]-[ferredoxin] + 2 H(+). The catalysed reaction is dimethylallyl diphosphate + 2 oxidized [2Fe-2S]-[ferredoxin] + H2O = (2E)-4-hydroxy-3-methylbut-2-enyl diphosphate + 2 reduced [2Fe-2S]-[ferredoxin] + 2 H(+). The protein operates within isoprenoid biosynthesis; dimethylallyl diphosphate biosynthesis; dimethylallyl diphosphate from (2E)-4-hydroxy-3-methylbutenyl diphosphate: step 1/1. It functions in the pathway isoprenoid biosynthesis; isopentenyl diphosphate biosynthesis via DXP pathway; isopentenyl diphosphate from 1-deoxy-D-xylulose 5-phosphate: step 6/6. In terms of biological role, catalyzes the conversion of 1-hydroxy-2-methyl-2-(E)-butenyl 4-diphosphate (HMBPP) into a mixture of isopentenyl diphosphate (IPP) and dimethylallyl diphosphate (DMAPP). Acts in the terminal step of the DOXP/MEP pathway for isoprenoid precursor biosynthesis. In Agrobacterium fabrum (strain C58 / ATCC 33970) (Agrobacterium tumefaciens (strain C58)), this protein is 4-hydroxy-3-methylbut-2-enyl diphosphate reductase.